The following is a 122-amino-acid chain: Small ribosomal subunit protein uS13 (122 aa).

The interval 99 to 122 is disordered; the sequence is RGQRTHTNARTRKGPAKAIAGKKK.

The protein belongs to the universal ribosomal protein uS13 family. Part of the 30S ribosomal subunit. Forms a loose heterodimer with protein S19. Forms two bridges to the 50S subunit in the 70S ribosome.

Functionally, located at the top of the head of the 30S subunit, it contacts several helices of the 16S rRNA. In the 70S ribosome it contacts the 23S rRNA (bridge B1a) and protein L5 of the 50S subunit (bridge B1b), connecting the 2 subunits; these bridges are implicated in subunit movement. Contacts the tRNAs in the A and P-sites. This is Small ribosomal subunit protein uS13 from Allorhizobium ampelinum (strain ATCC BAA-846 / DSM 112012 / S4) (Agrobacterium vitis (strain S4)).